Consider the following 161-residue polypeptide: Nucleotide-binding protein Bphy_0527 (161 aa).

It belongs to the YajQ family.

Its function is as follows. Nucleotide-binding protein. The chain is Nucleotide-binding protein Bphy_0527 from Paraburkholderia phymatum (strain DSM 17167 / CIP 108236 / LMG 21445 / STM815) (Burkholderia phymatum).